Reading from the N-terminus, the 44-residue chain is Large ribosomal subunit protein bL34 (44 aa).

2 stretches are compositionally biased toward basic residues: residues Met1–Lys14 and Leu31–Val44. The interval Met1–Val44 is disordered.

The protein belongs to the bacterial ribosomal protein bL34 family.

This Gloeobacter violaceus (strain ATCC 29082 / PCC 7421) protein is Large ribosomal subunit protein bL34.